The chain runs to 482 residues: FAD-dependent monooxygenase esdpE (482 aa).

The signal sequence occupies residues M1 to A21. Residues E35 and R108 each coordinate FAD. A glycan (N-linked (GlcNAc...) asparagine) is linked at N243. 2 residues coordinate FAD: D308 and A321. The helical transmembrane segment at L440 to W460 threads the bilayer.

Belongs to the paxM FAD-dependent monooxygenase family. It depends on FAD as a cofactor.

It localises to the membrane. It functions in the pathway secondary metabolite biosynthesis; terpenoid biosynthesis. Its function is as follows. FAD-dependent monooxygenase; part of the cluster that mediates the biosynthesis of shearones, diterpenoid pyrones (DPs) which are structurally diverse meroterpenoids consisting of a diterpene linked by a pyrone, and which may exhibit a range of bioactivities. Within the pathway, esdpE takes part to the biosynthesis of the molecular scaffold by catalyzing the formation of an (S)-epoxide ring at the terminal olefin of the geranylgeranyl group. The molecular scaffold is commonly biosynthesized by a series of enzymes including the non-reducing polyketide synthase (NR-PKS) esdpA that generates an alpha-pyrone; the prenyltransferase esdpC that attaches a geranylgeranyl pyrophosphate (GGPP) produced by the GGPP synthase (GGPPS) esdpD onto the pyrone unit; the FAD-dependent monooxygenase esdpE that converts an olefin on the diterpene unit into an epoxide; and the terpene cyclase esdpB that catalyzes the cyclization reactions to give the molecular backbone shearone A. In the modification steps, esdpF oxidizes the hydroxy group to a ketone at C-3 and esdpG then attaches hydroxy groups at both C-11 and C-12. After that, esdpI hydroxylates at C-20 and esdpH hydroxylates at C-6'. The ether bridge is generated by nucleophilic attack of the hydroxy group at C-20 to the carbonyl carbon at C-3. EsdpH can also functions prior to esdpI. The different combinations of these modification enzymes lead to the production of diverse shearone derivatives, shearone I being the end product of the pathway. The alpha-ketoglutarate-dependent dioxygenase esdpJ seems not to be involved in this pathway. This Penicillium shearii (Eupenicillium shearii) protein is FAD-dependent monooxygenase esdpE.